Reading from the N-terminus, the 589-residue chain is 3-(3-hydroxy-phenyl)propionate/3-hydroxycinnamic acid hydroxylase (589 aa).

FAD is bound by residues Asp15 to Lys44 and Phe283 to Asp293.

This sequence belongs to the PheA/TfdB FAD monooxygenase family. FAD serves as cofactor.

It carries out the reaction 3-(3-hydroxyphenyl)propanoate + NADH + O2 + H(+) = 3-(2,3-dihydroxyphenyl)propanoate + NAD(+) + H2O. It catalyses the reaction (2E)-3-(3-hydroxyphenyl)prop-2-enoate + NADH + O2 + H(+) = (2E)-3-(2,3-dihydroxyphenyl)prop-2-enoate + NAD(+) + H2O. It functions in the pathway aromatic compound metabolism; 3-phenylpropanoate degradation. Its function is as follows. Catalyzes the insertion of one atom of molecular oxygen into position 2 of the phenyl ring of 3-(3-hydroxyphenyl)propionate (3-HPP) and hydroxycinnamic acid (3HCI). The protein is 3-(3-hydroxy-phenyl)propionate/3-hydroxycinnamic acid hydroxylase of Comamonas testosteroni (Pseudomonas testosteroni).